A 578-amino-acid polypeptide reads, in one-letter code: Endonuclease GajA (578 aa).

Residues 1 to 341 are ATPase domain; it reads MKFSNITIKN…RLIRVHSTEK (341 aa). 32–36 contributes to the ATP binding site; that stretch reads DIGKT. Residues 370–510 are toprim domain; it reads LFAERVLLIE…LGERIYLSEI (141 aa). A divalent metal cation is bound by residues Glu379, Glu383, Asp463, Glu464, and Glu513.

In terms of assembly, homotetramer. Forms the core of the anti-phage defense complex. Interacts with GajB; 2 GajB dimers dock at opposite sides of the GajA complex to form a 4:4 GajA-GajB assembly (GajAB). GajAB interacts with Bacillus phage Phi3T Gad1 protein; this interaction forms a 4:4:8 GajAB-Gad1 complex and leads to GajAB inhibition. Mg(2+) is required as a cofactor. The cofactor is Mn(2+).

With respect to regulation, endonuclease activity inhibited by all NTPs, dNTPs, NDPs (at 0.5 mM, UDP not tested) and AMP-PNP; not inhibited by any tested NMP, dNMP or nucleoside. Inhibited by 100 mM NaCl, 100 mM KCl, 0.5 mM Co(2+) and 0.5 mM Ni(2+). Component of antiviral defense system Gabija type I, composed of GajA and GajB. Endonuclease that nicks double-stranded DNA within the sequence 5'-TNNNCGGGNNA-3' in the absence of nucleotides (NTP, dNTP and NDPs), cleaving after C-1. Has no detected ATPase activity. Expression of Gabija type I in B.subtilis (strain BEST7003) confers resistance to phages phi105, phi29, rho14, SpBeta and SBSphiC. Expression of Gabija type I in E.coli B (strain ATCC 11303) confers resistance to phage T7. It is thought that this enzyme is strongly suppressed during physiological growth (in E.coli total nucleotide concentration is over 8.7 mM in mid-log phase), but during viral replication, when nucleotides are rapidly consumed, it is de-suppressed and degrades target DNA. This chain is Endonuclease GajA, found in Bacillus cereus (strain VD045).